A 363-amino-acid chain; its full sequence is Protein RecA (363 aa).

78-85 (GPESGGKT) is a binding site for ATP.

The protein belongs to the RecA family.

The protein localises to the cytoplasm. Can catalyze the hydrolysis of ATP in the presence of single-stranded DNA, the ATP-dependent uptake of single-stranded DNA by duplex DNA, and the ATP-dependent hybridization of homologous single-stranded DNAs. It interacts with LexA causing its activation and leading to its autocatalytic cleavage. Probably involved in base excision repair. Functionally, following severe irradiation (7 kGy of gamma irradiation) genomic DNA is fragmented. DNA is progressively degraded for the first 1.5 hours after IR, in a step promoted by RecA and counterbalanced by DNA Pol I and Pol III, followed by massive DNA synthesis and genome reassembly in the next hour. Optimal priming of DNA synthesis requires both RecA and RadA, Pol III initiates DNA synthesis while both Pol I and Pol III are required for its continuation. In the absence of RecA the majority of the chromosome is still reconstituted, via either single-strand annealing or non-homologous end joining. This Deinococcus radiodurans (strain ATCC 13939 / DSM 20539 / JCM 16871 / CCUG 27074 / LMG 4051 / NBRC 15346 / NCIMB 9279 / VKM B-1422 / R1) protein is Protein RecA.